Consider the following 347-residue polypeptide: NADH-quinone oxidoreductase subunit H (347 aa).

8 helical membrane-spanning segments follow: residues 13–33 (LIIA…VAYL), 82–102 (GVFL…WAVI), 115–135 (VGIL…IMGG), 161–181 (IGFV…TDIV), 198–218 (FLDW…ISAL), 248–268 (FLLF…LMTV), 286–306 (VPGI…FAMV), and 325–345 (VFLP…KVFG).

Belongs to the complex I subunit 1 family. As to quaternary structure, NDH-1 is composed of 14 different subunits. Subunits NuoA, H, J, K, L, M, N constitute the membrane sector of the complex.

It localises to the cell inner membrane. It carries out the reaction a quinone + NADH + 5 H(+)(in) = a quinol + NAD(+) + 4 H(+)(out). Its function is as follows. NDH-1 shuttles electrons from NADH, via FMN and iron-sulfur (Fe-S) centers, to quinones in the respiratory chain. The immediate electron acceptor for the enzyme in this species is believed to be ubiquinone. Couples the redox reaction to proton translocation (for every two electrons transferred, four hydrogen ions are translocated across the cytoplasmic membrane), and thus conserves the redox energy in a proton gradient. This subunit may bind ubiquinone. This chain is NADH-quinone oxidoreductase subunit H, found in Brucella melitensis biotype 1 (strain ATCC 23456 / CCUG 17765 / NCTC 10094 / 16M).